The following is a 504-amino-acid chain: ATP synthase subunit alpha (504 aa).

169–176 lines the ATP pocket; it reads GDRQTGKT.

Belongs to the ATPase alpha/beta chains family. In terms of assembly, F-type ATPases have 2 components, CF(1) - the catalytic core - and CF(0) - the membrane proton channel. CF(1) has five subunits: alpha(3), beta(3), gamma(1), delta(1), epsilon(1). CF(0) has three main subunits: a(1), b(2) and c(9-12). The alpha and beta chains form an alternating ring which encloses part of the gamma chain. CF(1) is attached to CF(0) by a central stalk formed by the gamma and epsilon chains, while a peripheral stalk is formed by the delta and b chains.

Its subcellular location is the cell membrane. It carries out the reaction ATP + H2O + 4 H(+)(in) = ADP + phosphate + 5 H(+)(out). In terms of biological role, produces ATP from ADP in the presence of a proton gradient across the membrane. The alpha chain is a regulatory subunit. The protein is ATP synthase subunit alpha of Clostridium botulinum (strain ATCC 19397 / Type A).